The chain runs to 536 residues: Membrane protein insertase YidC (536 aa).

The next 5 membrane-spanning stretches (helical) occupy residues 7–27, 332–352, 411–431, 449–469, and 488–508; these read LLVM…QQDF, FWLL…IMGV, MGGC…YWTF, LSAQ…MFLL, and FMPV…VLYW.

Belongs to the OXA1/ALB3/YidC family. Type 1 subfamily. As to quaternary structure, interacts with the Sec translocase complex via SecD. Specifically interacts with transmembrane segments of nascent integral membrane proteins during membrane integration.

The protein localises to the cell inner membrane. In terms of biological role, required for the insertion and/or proper folding and/or complex formation of integral membrane proteins into the membrane. Involved in integration of membrane proteins that insert both dependently and independently of the Sec translocase complex, as well as at least some lipoproteins. Aids folding of multispanning membrane proteins. In Haemophilus ducreyi (strain 35000HP / ATCC 700724), this protein is Membrane protein insertase YidC.